Here is a 237-residue protein sequence, read N- to C-terminus: Proteasome subunit alpha type-5-B (237 aa).

N-acetylmethionine is present on M1. Glycyl lysine isopeptide (Lys-Gly) (interchain with G-Cter in ubiquitin) cross-links involve residues K43, K66, and K185.

This sequence belongs to the peptidase T1A family. In terms of assembly, component of the 20S core complex of the 26S proteasome. The 26S proteasome is composed of a core protease (CP), known as the 20S proteasome, capped at one or both ends by the 19S regulatory particle (RP/PA700). The 20S proteasome core is composed of 28 subunits that are arranged in four stacked rings, resulting in a barrel-shaped structure. The two end rings are each formed by seven alpha subunits, and the two central rings are each formed by seven beta subunits. The catalytic chamber with the active sites is on the inside of the barrel.

The protein resides in the cytoplasm. The protein localises to the nucleus. In terms of biological role, the proteasome is a multicatalytic proteinase complex which is characterized by its ability to cleave peptides with Arg, Phe, Tyr, Leu, and Glu adjacent to the leaving group at neutral or slightly basic pH. The proteasome has an ATP-dependent proteolytic activity. The protein is Proteasome subunit alpha type-5-B (PAE2) of Arabidopsis thaliana (Mouse-ear cress).